The chain runs to 488 residues: Capsid protein (488 aa).

Residues 80–93 (ISEDESDSGEEPEF) show a composition bias toward acidic residues. Residues 80-143 (ISEDESDSGE…QPKTIPGQKQ (64 aa)) are disordered. Residues 94–109 (EQVRMDRTGGTEIPKE) show a composition bias toward basic and acidic residues. Residues 121-124 (RKRK) carry the Nuclear localization signal motif. Positions 134 to 143 (QPKTIPGQKQ) are enriched in polar residues. Residues 410–427 (CRCWICNIEGHYANECPN) form a CCHC-type zinc finger. Residues 463–488 (YKEEEEETSTEESDDESSTSEDSDSD) form a disordered region. Residues 464–488 (KEEEEETSTEESDDESSTSEDSDSD) are compositionally biased toward acidic residues.

The protein belongs to the caulimoviridae capsid protein family. In terms of assembly, interacts (via nuclear localization signal) with host importin alpha.

The protein localises to the virion. The protein resides in the host nucleus. In terms of biological role, self assembles to form an icosahedral capsid, about 50 nm in diameter, nm, composed of 420 subunits of the viral capsid protein. The capsid encapsulates the genomic dsDNA. Following virus entry into host cell, provides nuclear import of the viral genome. Virus particles do not enter the nucleus, but dock at the nuclear membrane through the interaction with host importins. The polypeptide is Capsid protein (Arabidopsis thaliana (Mouse-ear cress)).